The sequence spans 465 residues: Protein CitXG (465 aa).

Positions 1–182 (MQHFFTTFST…QSLAQNHDFA (182 aa)) are apo-citrate lyase phosphoribosyl-dephospho-CoA transferase. The 2-(5''-triphosphoribosyl)-3'-dephosphocoenzyme-A synthase stretch occupies residues 183–465 (EHIGEQVYLA…TIFFLSFRGN (283 aa)).

In the N-terminal section; belongs to the CitX family. The protein in the C-terminal section; belongs to the CitG/MdcB family.

The enzyme catalyses apo-[citrate lyase ACP] + 2'-(5''-triphospho-alpha-D-ribosyl)-3'-dephospho-CoA = holo-[citrate lyase ACP] + diphosphate. It catalyses the reaction 3'-dephospho-CoA + ATP = 2'-(5''-triphospho-alpha-D-ribosyl)-3'-dephospho-CoA + adenine. Bifunctional enzyme that catalyzes formation of 2-(5''-triphosphoribosyl)-3'-dephosphocoenzyme-A, and then the transfer of this prosthetic group precursor to the apo-acyl carrier protein (gamma chain) of the citrate lyase to yield the holo-acyl carrier protein. This is Protein CitXG (citXG) from Haemophilus influenzae (strain ATCC 51907 / DSM 11121 / KW20 / Rd).